The sequence spans 203 residues: Large ribosomal subunit protein uL18 (203 aa).

Belongs to the universal ribosomal protein uL18 family. As to quaternary structure, part of the 50S ribosomal subunit. Contacts the 5S and 23S rRNAs.

Functionally, this is one of the proteins that bind and probably mediate the attachment of the 5S RNA into the large ribosomal subunit, where it forms part of the central protuberance. In Pyrococcus horikoshii (strain ATCC 700860 / DSM 12428 / JCM 9974 / NBRC 100139 / OT-3), this protein is Large ribosomal subunit protein uL18.